The chain runs to 450 residues: Tubulin alpha chain (450 aa).

Position 11 (Gln-11) interacts with GTP. Lys-40 is modified (N6-acetyllysine). Glu-71, Ser-140, Gly-144, Thr-145, Thr-179, Asn-206, and Asn-228 together coordinate GTP. Glu-71 is a Mg(2+) binding site. Glu-254 is a catalytic residue.

Belongs to the tubulin family. Dimer of alpha and beta chains. A typical microtubule is a hollow water-filled tube with an outer diameter of 25 nm and an inner diameter of 15 nM. Alpha-beta heterodimers associate head-to-tail to form protofilaments running lengthwise along the microtubule wall with the beta-tubulin subunit facing the microtubule plus end conferring a structural polarity. Microtubules usually have 13 protofilaments but different protofilament numbers can be found in some organisms and specialized cells. Mg(2+) serves as cofactor. In terms of processing, acetylation of alpha chains at Lys-40 stabilizes microtubules and affects affinity and processivity of microtubule motors. This modification has a role in multiple cellular functions, ranging from cell motility, cell cycle progression or cell differentiation to intracellular trafficking and signaling.

Its subcellular location is the cytoplasm. The protein resides in the cytoskeleton. It catalyses the reaction GTP + H2O = GDP + phosphate + H(+). Functionally, tubulin is the major constituent of microtubules, a cylinder consisting of laterally associated linear protofilaments composed of alpha- and beta-tubulin heterodimers. Microtubules grow by the addition of GTP-tubulin dimers to the microtubule end, where a stabilizing cap forms. Below the cap, tubulin dimers are in GDP-bound state, owing to GTPase activity of alpha-tubulin. The polypeptide is Tubulin alpha chain (Euplotoides octocarinatus (Freshwater ciliate)).